A 201-amino-acid polypeptide reads, in one-letter code: ATP-dependent dethiobiotin synthetase BioD (201 aa).

11-16 (DVGKTH) is a binding site for ATP. Thr-15 serves as a coordination point for Mg(2+). Residue Lys-31 is part of the active site. ATP is bound by residues Asp-40 and 93–96 (ELAG). Mg(2+) is bound by residues Asp-40 and Glu-93.

Belongs to the dethiobiotin synthetase family. Homodimer. Mg(2+) serves as cofactor.

The protein resides in the cytoplasm. The enzyme catalyses (7R,8S)-7,8-diammoniononanoate + CO2 + ATP = (4R,5S)-dethiobiotin + ADP + phosphate + 3 H(+). The protein operates within cofactor biosynthesis; biotin biosynthesis; biotin from 7,8-diaminononanoate: step 1/2. Functionally, catalyzes a mechanistically unusual reaction, the ATP-dependent insertion of CO2 between the N7 and N8 nitrogen atoms of 7,8-diaminopelargonic acid (DAPA, also called 7,8-diammoniononanoate) to form a ureido ring. The polypeptide is ATP-dependent dethiobiotin synthetase BioD (Campylobacter jejuni subsp. jejuni serotype O:6 (strain 81116 / NCTC 11828)).